Reading from the N-terminus, the 474-residue chain is Cysteine protease ATG4A (474 aa).

The segment at M1–Q32 is disordered. The active-site Nucleophile is the C161. Active-site residues include D358 and H360. A compositionally biased stretch (polar residues) spans K439 to G449. Residues K439 to L474 form a disordered region.

This sequence belongs to the peptidase C54 family. As to quaternary structure, interacts with ATG8.

The protein resides in the cytoplasm. The catalysed reaction is [protein]-C-terminal L-amino acid-glycyl-phosphatidylethanolamide + H2O = [protein]-C-terminal L-amino acid-glycine + a 1,2-diacyl-sn-glycero-3-phosphoethanolamine. Cysteine protease that plays a key role in autophagy by mediating both proteolytic activation and delipidation of ATG8 family proteins. The protease activity is required for proteolytic activation of ATG8 family proteins: cleaves the C-terminal amino acid of ATG8 proteins to reveal a C-terminal glycine. Exposure of the glycine at the C-terminus is essential for ATG8 proteins conjugation to phosphatidylethanolamine (PE) and insertion to membranes, which is necessary for autophagy. In addition to the protease activity, also mediates delipidation of PE-conjugated ATG8 proteins. The polypeptide is Cysteine protease ATG4A (ATG4A) (Oryza sativa subsp. japonica (Rice)).